The sequence spans 468 residues: Acetyl-CoA decarbonylase/synthase complex subunit gamma 1 (468 aa).

The 4Fe-4S domain occupies 1-61 (MKINSPLEAY…YAKKLAELDR (61 aa)). Residues cysteine 18, cysteine 21, cysteine 26, and cysteine 43 each coordinate [4Fe-4S] cluster.

In terms of assembly, heterodimer of delta and gamma chains. The ACDS complex is made up of alpha, epsilon, beta, gamma and delta chains with a probable stoichiometry of (alpha(2)epsilon(2))(4)-beta(8)-(gamma(1)delta(1))(8). The cofactor is corrinoid. Requires [4Fe-4S] cluster as cofactor.

The catalysed reaction is 5,6,7,8-tetrahydrosarcinapterin + methyl-Co(III)-[corrinoid Fe-S protein] = 5-methyltetrahydrosarcinapterin + Co(I)-[corrinoid Fe-S protein] + H(+). Its pathway is one-carbon metabolism; methanogenesis from acetate. Its function is as follows. Part of a complex that catalyzes the reversible cleavage of acetyl-CoA, allowing growth on acetate as sole source of carbon and energy. The protein is Acetyl-CoA decarbonylase/synthase complex subunit gamma 1 of Methanosarcina thermophila.